The sequence spans 209 residues: Small ribosomal subunit protein uS4 (209 aa).

Positions 98–164 (SRLDNVVYRG…TPFIVARETA (67 aa)) constitute an S4 RNA-binding domain.

Belongs to the universal ribosomal protein uS4 family. In terms of assembly, part of the 30S ribosomal subunit. Contacts protein S5. The interaction surface between S4 and S5 is involved in control of translational fidelity.

Its function is as follows. One of the primary rRNA binding proteins, it binds directly to 16S rRNA where it nucleates assembly of the body of the 30S subunit. Functionally, with S5 and S12 plays an important role in translational accuracy. The chain is Small ribosomal subunit protein uS4 from Frankia alni (strain DSM 45986 / CECT 9034 / ACN14a).